The chain runs to 1060 residues: Valine--tRNA ligase, mitochondrial (1060 aa).

A mitochondrion-targeting transit peptide spans 1-15 (MPHLPLASFRPPLWG). The disordered stretch occupies residues 25-50 (PQALCTQPEPHGSPVSRRNREAKQKR). Positions 146-156 (PNVTGSLHIGH) match the 'HIGH' region motif. Residue lysine 548 is modified to N6-acetyllysine. A 'KMSKS' region motif is present at residues 659 to 663 (KMSKS). Residue lysine 662 participates in ATP binding.

This sequence belongs to the class-I aminoacyl-tRNA synthetase family.

It is found in the mitochondrion. The catalysed reaction is tRNA(Val) + L-valine + ATP = L-valyl-tRNA(Val) + AMP + diphosphate. Functionally, catalyzes the attachment of valine to tRNA(Val) in a two-step reaction: valine is first activated by ATP to form Val-AMP and then transferred to the acceptor end of tRNA(Val). The protein is Valine--tRNA ligase, mitochondrial (Vars2) of Mus musculus (Mouse).